The sequence spans 384 residues: Odorant receptor 33c (384 aa).

Residues methionine 1–tyrosine 35 are Cytoplasmic-facing. Residues valine 36 to leucine 56 form a helical membrane-spanning segment. Topologically, residues leucine 57 to glutamate 63 are extracellular. The chain crosses the membrane as a helical span at residues phenylalanine 64–histidine 84. At leucine 85–cysteine 128 the chain is on the cytoplasmic side. A helical transmembrane segment spans residues leucine 129–isoleucine 149. Topologically, residues serine 150–arginine 169 are extracellular. A helical membrane pass occupies residues phenylalanine 170–glycine 190. Over leucine 191–arginine 251 the chain is Cytoplasmic. Residues threonine 252 to valine 272 form a helical membrane-spanning segment. Residues serine 273–tyrosine 274 are Extracellular-facing. A helical membrane pass occupies residues methionine 275–valine 295. At cysteine 296–glutamate 358 the chain is on the cytoplasmic side. Residues leucine 359–valine 379 form a helical membrane-spanning segment. The Extracellular segment spans residues arginine 380 to isoleucine 384.

The protein belongs to the insect chemoreceptor superfamily. Heteromeric odorant receptor channel (TC 1.A.69) family. Or2a subfamily. As to quaternary structure, interacts with Orco. Complexes exist early in the endomembrane system in olfactory sensory neurons (OSNs), coupling these complexes to the conserved ciliary trafficking pathway. In terms of tissue distribution, expressed in the antenna and in a subset of 18 olfactory receptor neurons in the maxillary palp.

The protein localises to the cell membrane. Functionally, odorant receptor which mediates acceptance or avoidance behavior, depending on its substrates. The odorant receptor repertoire encodes a large collection of odor stimuli that vary widely in identity, intensity, and duration. May form a complex with Orco to form odorant-sensing units, providing sensitive and prolonged odorant signaling and calcium permeability. The polypeptide is Odorant receptor 33c (Or33c) (Drosophila melanogaster (Fruit fly)).